The chain runs to 361 residues: Phosphoserine aminotransferase (361 aa).

L-glutamate is bound at residue R42. Residues 76-77 (AR), W102, T153, D173, and Q196 each bind pyridoxal 5'-phosphate. K197 is modified (N6-(pyridoxal phosphate)lysine). 238–239 (NT) is a binding site for pyridoxal 5'-phosphate.

It belongs to the class-V pyridoxal-phosphate-dependent aminotransferase family. SerC subfamily. Homodimer. It depends on pyridoxal 5'-phosphate as a cofactor.

The protein localises to the cytoplasm. It catalyses the reaction O-phospho-L-serine + 2-oxoglutarate = 3-phosphooxypyruvate + L-glutamate. The catalysed reaction is 4-(phosphooxy)-L-threonine + 2-oxoglutarate = (R)-3-hydroxy-2-oxo-4-phosphooxybutanoate + L-glutamate. Its pathway is amino-acid biosynthesis; L-serine biosynthesis; L-serine from 3-phospho-D-glycerate: step 2/3. The protein operates within cofactor biosynthesis; pyridoxine 5'-phosphate biosynthesis; pyridoxine 5'-phosphate from D-erythrose 4-phosphate: step 3/5. Functionally, catalyzes the reversible conversion of 3-phosphohydroxypyruvate to phosphoserine and of 3-hydroxy-2-oxo-4-phosphonooxybutanoate to phosphohydroxythreonine. In Yersinia pestis (strain Pestoides F), this protein is Phosphoserine aminotransferase.